We begin with the raw amino-acid sequence, 247 residues long: Uridylate kinase (247 aa).

18–21 is an ATP binding site; it reads KLSG. Residue Gly-60 coordinates UMP. 2 residues coordinate ATP: Gly-61 and Arg-65. Residues Asp-80 and 141 to 148 each bind UMP; that span reads TGNPFFTT. 3 residues coordinate ATP: Thr-168, Tyr-174, and Asp-177.

The protein belongs to the UMP kinase family. Homohexamer.

The protein localises to the cytoplasm. The catalysed reaction is UMP + ATP = UDP + ADP. The protein operates within pyrimidine metabolism; CTP biosynthesis via de novo pathway; UDP from UMP (UMPK route): step 1/1. Its activity is regulated as follows. Inhibited by UTP. In terms of biological role, catalyzes the reversible phosphorylation of UMP to UDP. This chain is Uridylate kinase, found in Pseudomonas fluorescens (strain ATCC BAA-477 / NRRL B-23932 / Pf-5).